We begin with the raw amino-acid sequence, 618 residues long: MEKLKRFLPEDQYEKLAAINNPYLHEFLAEWIEWLKPSKVFVCTDSPEDEEYVRWKALYYGEEKMLEMPRHTVHYDNYYDQARDKANTKLLVPKGVTLPFLNTMDREEGLKEIREIMKGIMKGKELFICFFVLGPRNSIFTIPAVQLTDSAYVAHSEFLLYRKGYEEFKRLGPTKNFLKFVHSAGELDERKTSKNLDKRRIYIDLVDETVYSANTQYGGNTIGLKKLAFRLTIQRAVREGWLSEHMFLMRVNGPNGRKTYFTGAYPSMCGKTSTAMIPWENIVGDDLVFIKNVDGTARAVNVEIGVFGIIEGINEKDDPIIWQVLHSPVEIIFSNVLVKDGKPYWNGMGIEIPDEGENHSGKWWRGKRDKEGNEIPPSHKNARFTVRLEAFPNLDKEALENPCGVEVGGMIFGGRDPDTWPPVREAFDWEHGVITMGASLESETTAATLGKEGVRAFNPMSILDFLSVHLGDYIRNYLEFGRKLKKKPKIFAVNYFLRENGKWLNEKLDKAVWLKWMELRVHGDVEAIETPIGYIPKYEDLRELFKQVLNKEYKKEDYEKQFKIRVPELLAKIDRIWNIYEPIGNIPEELFKQLEEERERLLKAREKYGDYISPFSLL.

Substrate is bound by residues arginine 83 and 217-219 (YGG). Residues lysine 226 and histidine 245 each coordinate Mn(2+). Substrate is bound at residue serine 267. 268 to 273 (MCGKTS) contributes to the GTP binding site. Cysteine 269 is an active-site residue. Aspartate 286 is a binding site for Mn(2+). 381–383 (NAR) serves as a coordination point for substrate. GTP-binding residues include arginine 383 and arginine 415.

It belongs to the phosphoenolpyruvate carboxykinase [GTP] family. Mn(2+) is required as a cofactor.

It is found in the cytoplasm. The catalysed reaction is oxaloacetate + GTP = phosphoenolpyruvate + GDP + CO2. It participates in carbohydrate biosynthesis; gluconeogenesis. In terms of biological role, catalyzes the conversion of oxaloacetate (OAA) to phosphoenolpyruvate (PEP), the rate-limiting step in the metabolic pathway that produces glucose from lactate and other precursors derived from the citric acid cycle. The protein is Phosphoenolpyruvate carboxykinase [GTP] of Pyrococcus abyssi (strain GE5 / Orsay).